A 252-amino-acid chain; its full sequence is Ribosomal RNA small subunit methyltransferase A (252 aa).

The S-adenosyl-L-methionine site is built by N10, L12, G36, E57, D81, and N98.

It belongs to the class I-like SAM-binding methyltransferase superfamily. rRNA adenine N(6)-methyltransferase family. RsmA subfamily.

The protein localises to the cytoplasm. It catalyses the reaction adenosine(1518)/adenosine(1519) in 16S rRNA + 4 S-adenosyl-L-methionine = N(6)-dimethyladenosine(1518)/N(6)-dimethyladenosine(1519) in 16S rRNA + 4 S-adenosyl-L-homocysteine + 4 H(+). Its function is as follows. Specifically dimethylates two adjacent adenosines (A1518 and A1519) in the loop of a conserved hairpin near the 3'-end of 16S rRNA in the 30S particle. May play a critical role in biogenesis of 30S subunits. In Mycoplasmopsis pulmonis (strain UAB CTIP) (Mycoplasma pulmonis), this protein is Ribosomal RNA small subunit methyltransferase A.